The following is a 243-amino-acid chain: Aliphatic sulfonates import ATP-binding protein SsuB (243 aa).

Residues 11-230 (ATVRGLRKSY…RTHPSFASYT (220 aa)) form the ABC transporter domain. 43-50 (GRSGSGKS) serves as a coordination point for ATP.

The protein belongs to the ABC transporter superfamily. Aliphatic sulfonates importer (TC 3.A.1.17.2) family. As to quaternary structure, the complex is composed of two ATP-binding proteins (SsuB), two transmembrane proteins (SsuC) and a solute-binding protein (SsuA).

The protein resides in the cell membrane. The enzyme catalyses ATP + H2O + aliphatic sulfonate-[sulfonate-binding protein]Side 1 = ADP + phosphate + aliphatic sulfonateSide 2 + [sulfonate-binding protein]Side 1.. Its function is as follows. Part of the ABC transporter complex SsuABC involved in aliphatic sulfonates import. Responsible for energy coupling to the transport system. Is also involved in taurine transport. Seems to not be involved in long chain aliphatic sulfonates transport (chain length of eight carbon atoms or more). The chain is Aliphatic sulfonates import ATP-binding protein SsuB from Corynebacterium glutamicum (strain ATCC 13032 / DSM 20300 / JCM 1318 / BCRC 11384 / CCUG 27702 / LMG 3730 / NBRC 12168 / NCIMB 10025 / NRRL B-2784 / 534).